A 472-amino-acid chain; its full sequence is MDKKIQRFSCTTILVGKKASYDGSTMVARTEDSQNGDFTPKKMIVVKPEDQPRHYRSVQSSFEMDLPDNPMTYTSVPDALGKDGIWAEAGVNEANVAMSATETITTNSRVLGADPLVASGIGEEDMVTLVLPYIRSAREGVLRLGAILEDYGTYESNGVAFSDEHDIWWLETIGGHHWIARRVPDDAYVTNPNQFGIDHFEFNNPEDYLCSADLKDFIDTYHLDLTYSHEHFNPRYAFGSQRDKDRQYNTPRAWIMQKFLNPEIVQDPRSFALAWCQKPYRKITVEDVKYVLSSHYQDTGYDPYGSEGTPVSKKVFRPIGINRTSQTAILHIRPNKPQEIAAIQWMAYGSMPFNTMVPFFTQVKTIPDYFANTYENVFTDNFYWTNRLIAALADPHYNHHETDLDNYLEETMAKGHAMLHAVEVQLLAGETVDLEEENQKMSDYVQGETQTLLNKILFDASNLMTNRFSLSD.

Cysteine 10 is an active-site residue.

It belongs to the peptidase C69 family.

It carries out the reaction an L-aminoacyl-L-amino acid + H2O = 2 an L-alpha-amino acid. In Streptococcus pyogenes serotype M1, this protein is Probable dipeptidase A (pepDA).